The sequence spans 314 residues: L-lactate dehydrogenase 1 (314 aa).

Residues Val-16, Asp-37, Lys-42, Tyr-68, and Gly-82–Leu-83 contribute to the NAD(+) site. Residues Gln-85, Arg-91, and Asn-123–Asp-126 each bind substrate. Residues Ala-121–Asn-123 and Ser-146 contribute to the NAD(+) site. Residue Asp-151–Arg-154 coordinates substrate. Beta-D-fructose 1,6-bisphosphate is bound by residues Arg-156 and His-171. The active-site Proton acceptor is His-178. Tyr-223 is modified (phosphotyrosine). Substrate is bound at residue Thr-232.

Belongs to the LDH/MDH superfamily. LDH family. As to quaternary structure, homotetramer.

It is found in the cytoplasm. The catalysed reaction is (S)-lactate + NAD(+) = pyruvate + NADH + H(+). It functions in the pathway fermentation; pyruvate fermentation to lactate; (S)-lactate from pyruvate: step 1/1. With respect to regulation, allosterically activated by fructose 1,6-bisphosphate (FBP). Its function is as follows. Catalyzes the conversion of lactate to pyruvate. This is L-lactate dehydrogenase 1 from Bacillus anthracis.